Here is a 442-residue protein sequence, read N- to C-terminus: MKPKNFPLARYVLGAMLAFLFVGVAQAQTETTSIAEVTYAINNLFLLAAAVLVLFMQAGFAMLEAGLSSHKNTVNVLFKNTFDVCVGVLLYFLFGYSLMYGENPVLGGFFGWGGFGITNNLDNVEGLSPQVDWLFQAAFAATAATIVSGAVMGRMYFKAYLIYSAVITGLVYPISGHWKWGGGWLDKLGFHDFAGSLLVHSVGGFAALAAVVVMGPRIGRFEGNKINSLGYQGITSSSLGVFILWVGWYGFNPGSQLAFVGALNTNTTMLIAVNTTLSAAAGGLAALAFDWITENKRKPNLLVTLNGILGGLVGITAGCDTVSNWSAIAIGVVAGILSVLGTKLLDRLRIDDGVGAWPVHGLCGIWGGIAVGIFSTNVEHKLSAQIVGSLVIPFWAFITMFFLFYVMDLWGILRVKPSQEKVGLDIVEHGQTEKGVEIAFED.

Transmembrane regions (helical) follow at residues 5-25 (NFPLARYVLGAMLAFLFVGVA), 44-64 (LFLLAAAVLVLFMQAGFAMLE), 81-101 (TFDVCVGVLLYFLFGYSLMYG), 104-124 (PVLGGFFGWGGFGITNNLDNV), 133-153 (WLFQAAFAATAATIVSGAVMG), 155-175 (MYFKAYLIYSAVITGLVYPIS), 193-213 (FAGSLLVHSVGGFAALAAVVV), 240-260 (GVFILWVGWYGFNPGSQLAFV), 269-289 (MLIAVNTTLSAAAGGLAALAF), 299-319 (PNLLVTLNGILGGLVGITAGC), 325-345 (WSAIAIGVVAGILSVLGTKLL), 354-374 (VGAWPVHGLCGIWGGIAVGIF), and 386-406 (IVGSLVIPFWAFITMFFLFYV).

This sequence belongs to the ammonia transporter channel (TC 1.A.11.2) family.

The protein resides in the cell membrane. The sequence is that of Putative ammonium transporter sll1017 from Synechocystis sp. (strain ATCC 27184 / PCC 6803 / Kazusa).